We begin with the raw amino-acid sequence, 368 residues long: Ribosomal RNA large subunit methyltransferase M (368 aa).

Residues S189, 222–225, D241, D261, and D278 contribute to the S-adenosyl-L-methionine site; that span reads CPGG. Residue K307 is the Proton acceptor of the active site.

This sequence belongs to the class I-like SAM-binding methyltransferase superfamily. RNA methyltransferase RlmE family. RlmM subfamily. Monomer.

Its subcellular location is the cytoplasm. It catalyses the reaction cytidine(2498) in 23S rRNA + S-adenosyl-L-methionine = 2'-O-methylcytidine(2498) in 23S rRNA + S-adenosyl-L-homocysteine + H(+). Functionally, catalyzes the 2'-O-methylation at nucleotide C2498 in 23S rRNA. This chain is Ribosomal RNA large subunit methyltransferase M, found in Yersinia pestis bv. Antiqua (strain Angola).